The following is a 273-amino-acid chain: 3-methyl-2-oxobutanoate hydroxymethyltransferase (273 aa).

Positions 53 and 92 each coordinate Mg(2+). Residues 53–54, Asp92, and Lys120 each bind 3-methyl-2-oxobutanoate; that span reads DS. Glu122 is a binding site for Mg(2+). Glu189 functions as the Proton acceptor in the catalytic mechanism.

The protein belongs to the PanB family. In terms of assembly, homodecamer; pentamer of dimers. Mg(2+) serves as cofactor.

It is found in the cytoplasm. The enzyme catalyses 3-methyl-2-oxobutanoate + (6R)-5,10-methylene-5,6,7,8-tetrahydrofolate + H2O = 2-dehydropantoate + (6S)-5,6,7,8-tetrahydrofolate. Its pathway is cofactor biosynthesis; (R)-pantothenate biosynthesis; (R)-pantoate from 3-methyl-2-oxobutanoate: step 1/2. Its function is as follows. Catalyzes the reversible reaction in which hydroxymethyl group from 5,10-methylenetetrahydrofolate is transferred onto alpha-ketoisovalerate to form ketopantoate. This is 3-methyl-2-oxobutanoate hydroxymethyltransferase from Cupriavidus pinatubonensis (strain JMP 134 / LMG 1197) (Cupriavidus necator (strain JMP 134)).